A 483-amino-acid chain; its full sequence is GTPase Der (483 aa).

EngA-type G domains follow at residues 3-167 and 212-387; these read FTLA…GEER and LRIA…EIWN. Residues 9–16, 56–60, 119–122, 218–225, 265–269, and 330–333 each bind GTP; these read GRPNVGKS, DTAGL, NKAE, GRPNAGKS, DTAGM, and NKWD. In terms of domain architecture, KH-like spans 388–472; the sequence is RRISTGRLNR…PIRLSLRTSD (85 aa).

Belongs to the TRAFAC class TrmE-Era-EngA-EngB-Septin-like GTPase superfamily. EngA (Der) GTPase family. As to quaternary structure, associates with the 50S ribosomal subunit.

In terms of biological role, GTPase that plays an essential role in the late steps of ribosome biogenesis. The sequence is that of GTPase Der from Brucella suis biovar 1 (strain 1330).